The chain runs to 177 residues: Probable phospholipid hydroperoxide glutathione peroxidase (177 aa).

Cys-42 is an active-site residue.

The protein belongs to the glutathione peroxidase family.

The protein resides in the cytoplasm. The catalysed reaction is a hydroperoxy polyunsaturated fatty acid + 2 glutathione = a hydroxy polyunsaturated fatty acid + glutathione disulfide + H2O. Protects cells and enzymes from oxidative damage, by catalyzing the reduction of hydrogen peroxide, lipid peroxides and organic hydroperoxide, by glutathione. The sequence is that of Probable phospholipid hydroperoxide glutathione peroxidase from Encephalitozoon cuniculi (strain GB-M1) (Microsporidian parasite).